Reading from the N-terminus, the 122-residue chain is Fluoride-specific ion channel FluC (122 aa).

The next 4 helical transmembrane spans lie at 4–24 (LLIA…GTAI), 34–54 (IGTM…MTLL), 66–86 (LALV…EWET), and 95–115 (FWIG…AVWF). Positions 74 and 77 each coordinate Na(+).

Belongs to the fluoride channel Fluc/FEX (TC 1.A.43) family.

The protein localises to the cell inner membrane. The enzyme catalyses fluoride(in) = fluoride(out). Its activity is regulated as follows. Na(+) is not transported, but it plays an essential structural role and its presence is essential for fluoride channel function. Fluoride-specific ion channel. Important for reducing fluoride concentration in the cell, thus reducing its toxicity. The polypeptide is Fluoride-specific ion channel FluC (Solibacter usitatus (strain Ellin6076)).